The following is a 367-amino-acid chain: Alanine racemase (367 aa).

Catalysis depends on Lys34, which acts as the Proton acceptor; specific for D-alanine. Lys34 carries the N6-(pyridoxal phosphate)lysine modification. Position 131 (Arg131) interacts with substrate. The active-site Proton acceptor; specific for L-alanine is Tyr258. Substrate is bound at residue Met306.

Belongs to the alanine racemase family. It depends on pyridoxal 5'-phosphate as a cofactor.

It carries out the reaction L-alanine = D-alanine. Its pathway is amino-acid biosynthesis; D-alanine biosynthesis; D-alanine from L-alanine: step 1/1. Functionally, catalyzes the interconversion of L-alanine and D-alanine. May also act on other amino acids. This chain is Alanine racemase (alr), found in Corynebacterium efficiens (strain DSM 44549 / YS-314 / AJ 12310 / JCM 11189 / NBRC 100395).